We begin with the raw amino-acid sequence, 875 residues long: Neurotrypsin (875 aa).

Residues 1-20 (MTLARFVLALVLGALPEVVG) form the signal peptide. A glycan (N-linked (GlcNAc...) asparagine) is linked at N26. Residues 30–87 (HHRHRHSPPPGPQYPYYLPTHQRPPRTRPPPPLPRFPRPPRALPAQRPHALQAGHTPR) are disordered. The segment covering 56–71 (TRPPPPLPRFPRPPRA) has biased composition (pro residues). The 73-residue stretch at 93–165 (CPAGELWVSV…GKVDWGYCDC (73 aa)) folds into the Kringle domain. 20 disulfide bridges follow: C93–C165, C109–C149, C138–C163, C195–C259, C208–C269, C239–C249, C305–C369, C318–C379, C349–C359, C412–C475, C425–C485, C455–C465, C525–C589, C538–C599, C569–C579, C619–C750, C661–C677, C765–C831, C794–C808, and C821–C850. SRCR domains are found at residues 170-271 (VRLR…TCSF), 280-381 (IRLV…SCTP), 387-487 (IRLA…ACYP), and 500-601 (VRLM…ICDY). Positions 619 to 630 (CGLRLLHRRQKR) are zymogen activation region. The Peptidase S1 domain maps to 631–874 (IIGGKNSLRG…FVPWIKSVTK (244 aa)). The active-site Charge relay system is H676. A glycan (N-linked (GlcNAc...) asparagine) is linked at N683. The active-site Charge relay system is D726. The active-site Charge relay system is the S825.

Belongs to the peptidase S1 family.

It localises to the secreted. In terms of biological role, plays a role in neuronal plasticity and the proteolytic action may subserve structural reorganizations associated with learning and memory operations. The protein is Neurotrypsin (PRSS12) of Macaca mulatta (Rhesus macaque).